The sequence spans 473 residues: Psoralen synthase (473 aa).

A helical membrane pass occupies residues 1 to 17 (YFFPLFLVTIFLYKWLV). The interval 350-355 (TAPLLV) is substrate specificity. Residue C425 participates in heme binding.

This sequence belongs to the cytochrome P450 family. Heme serves as cofactor.

The protein resides in the microsome membrane. The enzyme catalyses (7S)-marmesin + reduced [NADPH--hemoprotein reductase] + O2 = psoralen + acetone + oxidized [NADPH--hemoprotein reductase] + 2 H2O + H(+). It participates in secondary metabolite biosynthesis. Involved in the biosynthesis of coumarins and furanocoumarins (FCs), natural products required for defense responses against attacks by predators with potential medical and agroindustrial usages such as anticoagulant, rodenticide and artificial vanilla substitutes. Involved in linear furanocumarin (psoralen) biosynthesis. Converts marmesin to psoralen and, with much lower affinity, 5-hydroxymarmesin to bergaptol. This is Psoralen synthase from Pastinaca sativa (Wild parsnip).